The following is a 58-amino-acid chain: MSEVKVGKNESLDSALKRFKRSCQKAGVLQDIRKHEHYEKPSIKKKKKSEAARKKKRF.

Residues 28–58 are disordered; that stretch reads VLQDIRKHEHYEKPSIKKKKKSEAARKKKRF. The span at 31 to 42 shows a compositional bias: basic and acidic residues; the sequence is DIRKHEHYEKPS. The span at 43 to 58 shows a compositional bias: basic residues; sequence IKKKKKSEAARKKKRF.

The protein belongs to the bacterial ribosomal protein bS21 family.

The sequence is that of Small ribosomal subunit protein bS21 from Syntrophomonas wolfei subsp. wolfei (strain DSM 2245B / Goettingen).